We begin with the raw amino-acid sequence, 135 residues long: Probable transporter XF_0766 (135 aa).

A run of 4 helical transmembrane segments spans residues Tyr4–Leu24, Ala45–Phe65, Val71–Thr91, and Ile114–Tyr134.

It belongs to the TsuA/YedE (TC 9.B.102) family.

The protein resides in the cell inner membrane. The protein is Probable transporter XF_0766 of Xylella fastidiosa (strain 9a5c).